A 166-amino-acid polypeptide reads, in one-letter code: Large ribosomal subunit protein uL10 (166 aa).

This sequence belongs to the universal ribosomal protein uL10 family. In terms of assembly, part of the ribosomal stalk of the 50S ribosomal subunit. The N-terminus interacts with L11 and the large rRNA to form the base of the stalk. The C-terminus forms an elongated spine to which L12 dimers bind in a sequential fashion forming a multimeric L10(L12)X complex.

Its function is as follows. Forms part of the ribosomal stalk, playing a central role in the interaction of the ribosome with GTP-bound translation factors. The polypeptide is Large ribosomal subunit protein uL10 (Listeria monocytogenes serotype 4b (strain CLIP80459)).